A 346-amino-acid polypeptide reads, in one-letter code: Fusaric acid resistance protein FusC (346 aa).

4 helical membrane passes run valine 10–glycine 30, valine 248–valine 268, methionine 291–proline 311, and glycine 315–leucine 335.

Belongs to the aromatic acid exporter ArAE (TC 2.A.85) family.

The protein localises to the cell membrane. In terms of biological role, involved in the resistance (detoxification) of the fungal toxin fusaric acid. This is Fusaric acid resistance protein FusC (fusC) from Burkholderia cepacia (Pseudomonas cepacia).